The chain runs to 279 residues: Tryptophan synthase alpha chain (279 aa).

Active-site proton acceptor residues include E50 and D61.

The protein belongs to the TrpA family. In terms of assembly, tetramer of two alpha and two beta chains.

It carries out the reaction (1S,2R)-1-C-(indol-3-yl)glycerol 3-phosphate + L-serine = D-glyceraldehyde 3-phosphate + L-tryptophan + H2O. Its pathway is amino-acid biosynthesis; L-tryptophan biosynthesis; L-tryptophan from chorismate: step 5/5. Functionally, the alpha subunit is responsible for the aldol cleavage of indoleglycerol phosphate to indole and glyceraldehyde 3-phosphate. The chain is Tryptophan synthase alpha chain from Rhizobium rhizogenes (strain K84 / ATCC BAA-868) (Agrobacterium radiobacter).